We begin with the raw amino-acid sequence, 365 residues long: Phenoloxidase-activating factor 1 (365 aa).

Residues 1-23 form the signal peptide; it reads MKQVHFFILWFFVLNLYSIKAQA. Positions 24-74 constitute a Clip domain; sequence GCRTPNGENARCVPINNCKILYDSVLTSDPEVIRFLRASQCGYNGQPLVCC. Cystine bridges form between Cys-25–Cys-73, Cys-35–Cys-64, Cys-41–Cys-74, Cys-101–Cys-240, Cys-140–Cys-156, Cys-184–Cys-191, Cys-284–Cys-301, and Cys-311–Cys-340. Residues 110–364 enclose the Peptidase S1 domain; that stretch reads ILNGDDTVPE…YRDWIEGNIR (255 aa). N-linked (GlcNAc...) asparagine glycosylation occurs at Asn-131. Residue His-155 is the Charge relay system of the active site. Ca(2+) is bound by residues Glu-175, Asn-177, Thr-180, and Asp-183. Asp-220 serves as the catalytic Charge relay system. Residue Ser-315 is the Charge relay system of the active site.

The protein belongs to the peptidase S1 family. CLIP subfamily. In terms of assembly, in the active form, heterodimer of a light chain and a heavy chain; disulfide-linked. In terms of processing, cleaved following the recognition of pathogen-derived products, probably by a lysyl endopeptidase.

It localises to the secreted. With respect to regulation, protein stability and endopeptidase activity are calcium dependent. First cleavage on prophenoloxidase PPO1 and PPO2 is not dependent on calcium; however, cleavage of PPO1 and PPO2 to their active forms is dependent on calcium and on the presence of PPAF2 and PPAF3. Cleavage of PPAF2 is inhibited by calcium. Inhibited by ethylenediaminetetraacetic acid (EDTA), p-nitrophenyl-p'-guanido-benzoate, diisopropylphosphorofluoridate (iPr2PF) and p-(Amidinophenyl)methanesulfonyl fluoride (p-APMSF). Serine endopeptidase which, by cleaving prophenoloxidase PPO1 and PPO2, is required for the activation of the prophenoloxidase cascade probably following the recognition of pathogen-derived products. This chain is Phenoloxidase-activating factor 1, found in Holotrichia diomphalia (Korean black chafer).